The following is a 141-amino-acid chain: Molybdopterin synthase catalytic subunit 2 (141 aa).

Residues 37 to 39 (MIR), 103 to 104 (HR), K119, and 126 to 128 (KHQ) contribute to the substrate site.

This sequence belongs to the MoaE family. Heterotetramer of 2 MoaD subunits and 2 MoaE subunits. Also stable as homodimer. The enzyme changes between these two forms during catalysis.

It carries out the reaction 2 [molybdopterin-synthase sulfur-carrier protein]-C-terminal-Gly-aminoethanethioate + cyclic pyranopterin phosphate + H2O = molybdopterin + 2 [molybdopterin-synthase sulfur-carrier protein]-C-terminal Gly-Gly + 2 H(+). The protein operates within cofactor biosynthesis; molybdopterin biosynthesis. Its function is as follows. Converts molybdopterin precursor Z into molybdopterin. This requires the incorporation of two sulfur atoms into precursor Z to generate a dithiolene group. The sulfur is provided by MoaD. The protein is Molybdopterin synthase catalytic subunit 2 (moaE2) of Mycobacterium tuberculosis (strain CDC 1551 / Oshkosh).